The chain runs to 200 residues: Small ribosomal subunit protein uS4 (200 aa).

The interval 22-42 (TGKELEKRPYAPGPHGPNQRK) is disordered. An S4 RNA-binding domain is found at 92-152 (ARLDNLVYRM…EKSRNLAVIK (61 aa)).

It belongs to the universal ribosomal protein uS4 family. Part of the 30S ribosomal subunit. Contacts protein S5. The interaction surface between S4 and S5 is involved in control of translational fidelity.

In terms of biological role, one of the primary rRNA binding proteins, it binds directly to 16S rRNA where it nucleates assembly of the body of the 30S subunit. With S5 and S12 plays an important role in translational accuracy. The sequence is that of Small ribosomal subunit protein uS4 from Bacillus cytotoxicus (strain DSM 22905 / CIP 110041 / 391-98 / NVH 391-98).